Consider the following 25-residue polypeptide: MRAKWRKKRVRRLKRKRRKTRARSK.

The disordered stretch occupies residues 1 to 25; it reads MRAKWRKKRVRRLKRKRRKTRARSK.

It belongs to the eukaryotic ribosomal protein eS32 family. As to quaternary structure, component of the small ribosomal subunit.

This chain is Small ribosomal subunit protein eS32 (RPL41), found in Quercus suber (Cork oak).